We begin with the raw amino-acid sequence, 81 residues long: Small ribosomal subunit protein bS16 (81 aa).

This sequence belongs to the bacterial ribosomal protein bS16 family.

This Desulfotalea psychrophila (strain LSv54 / DSM 12343) protein is Small ribosomal subunit protein bS16.